Reading from the N-terminus, the 93-residue chain is YcgL domain-containing protein VIBHAR_01387 (93 aa).

A YcgL domain is found at 1–84 (MLCSIYKSSR…PPENLLEKYK (84 aa)).

In Vibrio campbellii (strain ATCC BAA-1116), this protein is YcgL domain-containing protein VIBHAR_01387.